The following is a 119-amino-acid chain: Large ribosomal subunit protein uL18 (119 aa).

The protein belongs to the universal ribosomal protein uL18 family. As to quaternary structure, part of the 50S ribosomal subunit; part of the 5S rRNA/L5/L18/L25 subcomplex. Contacts the 5S and 23S rRNAs.

This is one of the proteins that bind and probably mediate the attachment of the 5S RNA into the large ribosomal subunit, where it forms part of the central protuberance. The chain is Large ribosomal subunit protein uL18 from Clostridium botulinum (strain ATCC 19397 / Type A).